The sequence spans 116 residues: MKRLLPSLRAKKRYLAFELISEEPASRSDIVKEVMSSASSLLGDVTTSDCDIRVLGFENGKGIIQCSHTKVKQTRASLAALTRINGKRATLHVLGVSGTVKRATEKFLQDEGVFSS.

This sequence belongs to the eukaryotic/archaeal RNase P protein component 2 family. In terms of assembly, consists of a catalytic RNA component and at least 4-5 protein subunits.

It localises to the cytoplasm. The enzyme catalyses Endonucleolytic cleavage of RNA, removing 5'-extranucleotides from tRNA precursor.. In terms of biological role, part of ribonuclease P, a protein complex that generates mature tRNA molecules by cleaving their 5'-ends. The sequence is that of Ribonuclease P protein component 2 from Methanosarcina mazei (strain ATCC BAA-159 / DSM 3647 / Goe1 / Go1 / JCM 11833 / OCM 88) (Methanosarcina frisia).